A 612-amino-acid polypeptide reads, in one-letter code: Threonine--tRNA ligase (612 aa).

Positions 218-509 are catalytic; sequence DHRKLGVELG…LSEHFGGNFP (292 aa). Residues Cys310, His361, and His486 each contribute to the Zn(2+) site.

Belongs to the class-II aminoacyl-tRNA synthetase family. As to quaternary structure, homodimer. Zn(2+) is required as a cofactor.

The protein resides in the cytoplasm. It catalyses the reaction tRNA(Thr) + L-threonine + ATP = L-threonyl-tRNA(Thr) + AMP + diphosphate + H(+). In terms of biological role, catalyzes the attachment of threonine to tRNA(Thr) in a two-step reaction: L-threonine is first activated by ATP to form Thr-AMP and then transferred to the acceptor end of tRNA(Thr). Also edits incorrectly charged L-seryl-tRNA(Thr). The polypeptide is Threonine--tRNA ligase (Helicobacter pylori (strain G27)).